The following is a 775-amino-acid chain: Dipeptidyl peptidase 4 (775 aa).

Positions 1–15 (MKFLSLLLLAGIAQA) are cleaved as a signal peptide. N-linked (GlcNAc...) asparagine glycosylation is found at asparagine 81, asparagine 111, asparagine 170, and asparagine 219. Residues serine 613, aspartate 690, and histidine 725 each act as charge relay system in the active site.

The protein belongs to the peptidase S9B family.

Its subcellular location is the secreted. The catalysed reaction is Release of an N-terminal dipeptide, Xaa-Yaa-|-Zaa-, from a polypeptide, preferentially when Yaa is Pro, provided Zaa is neither Pro nor hydroxyproline.. Its function is as follows. Extracellular dipeptidyl-peptidase which removes N-terminal dipeptides sequentially from polypeptides having unsubstituted N-termini provided that the penultimate residue is proline. Contributes to pathogenicity. The sequence is that of Dipeptidyl peptidase 4 (DPP4) from Trichophyton equinum (Horse ringworm fungus).